Reading from the N-terminus, the 211-residue chain is UPF0056 membrane protein YvbG (211 aa).

The next 6 membrane-spanning stretches (helical) occupy residues 1 to 21, 47 to 67, 69 to 89, 114 to 134, 150 to 170, and 188 to 208; these read MMFS…NPIG, ILSF…FKLF, INIH…AYNL, ISVT…ATVM, MIGI…SAFI, and LILA…MFPV.

The protein belongs to the UPF0056 (MarC) family.

Its subcellular location is the cell membrane. The sequence is that of UPF0056 membrane protein YvbG (yvbG) from Bacillus subtilis (strain 168).